Here is a 307-residue protein sequence, read N- to C-terminus: N-acetylmuramic acid 6-phosphate etherase (307 aa).

An SIS domain is found at 62-225; the sequence is IVLAFQKGAR…TTASMIRIGK (164 aa). Residue Glu-90 is the Proton donor of the active site. Glu-121 is an active-site residue.

It belongs to the GCKR-like family. MurNAc-6-P etherase subfamily. In terms of assembly, homodimer.

It catalyses the reaction N-acetyl-D-muramate 6-phosphate + H2O = N-acetyl-D-glucosamine 6-phosphate + (R)-lactate. The protein operates within amino-sugar metabolism; 1,6-anhydro-N-acetylmuramate degradation. It functions in the pathway amino-sugar metabolism; N-acetylmuramate degradation. It participates in cell wall biogenesis; peptidoglycan recycling. Specifically catalyzes the cleavage of the D-lactyl ether substituent of MurNAc 6-phosphate, producing GlcNAc 6-phosphate and D-lactate. Together with AnmK, is also required for the utilization of anhydro-N-acetylmuramic acid (anhMurNAc) either imported from the medium or derived from its own cell wall murein, and thus plays a role in cell wall recycling. This chain is N-acetylmuramic acid 6-phosphate etherase, found in Mesorhizobium japonicum (strain LMG 29417 / CECT 9101 / MAFF 303099) (Mesorhizobium loti (strain MAFF 303099)).